The sequence spans 317 residues: MKNLAERSAGSLYWWLLATLFLPIAIPGLVLKLLTMMKEQRNARHLNGKVVLITGASSGLGEALAHSFFLAGCKVVLAARRKDELERVRKDLLELHATVPTHPPIILPLDLSDLNSIGGKVQSVLEIHGAIDILVNNGGISVRGDALSTAIDVDIRIMLVNYFGSVALTKACLPSMMARKEGRIVSISSVQGKFAIPHRSAYSASKHAMQAFCDSLRAEVAKDNIKVTLISPGYINTALSLNALTGTGASYGKMDAATAGGASPQDTASSILKAIARDEKDVMLAPIAPRAAYWLRHLAPSVYFWIMKKRAEKLNST.

The Cytoplasmic portion of the chain corresponds to 1 to 10; it reads MKNLAERSAG. A helical; Signal-anchor for type II membrane protein transmembrane segment spans residues 11 to 31; that stretch reads SLYWWLLATLFLPIAIPGLVL. At 32 to 317 the chain is on the peroxisomal side; sequence KLLTMMKEQR…KKRAEKLNST (286 aa). 52–76 provides a ligand contact to NAD(+); that stretch reads LITGASSGLGEALAHSFFLAGCKVV. Serine 189 provides a ligand contact to substrate. Tyrosine 202 acts as the Proton acceptor in catalysis.

This sequence belongs to the short-chain dehydrogenases/reductases (SDR) family.

The protein localises to the peroxisome membrane. In terms of biological role, putative oxidoreductase. This Anopheles gambiae (African malaria mosquito) protein is Dehydrogenase/reductase SDR family protein 7-like.